Consider the following 229-residue polypeptide: Synaptogyrin-3 (229 aa).

Met1 carries the post-translational modification N-acetylmethionine. In terms of domain architecture, MARVEL spans 20 to 172 (FARRPQTLLR…LTVKALQRFR (153 aa)). Helical transmembrane passes span 30 to 50 (VASW…GYVN), 70 to 90 (FGVA…LLDV), 105 to 125 (VLLD…GFCF), and 148 to 168 (AAIA…VKAL). Over residues 209-219 (QSPPFTETLDT) the composition is skewed to polar residues. The segment at 209-229 (QSPPFTETLDTSPKGYQVPAY) is disordered.

It belongs to the synaptogyrin family. As to quaternary structure, interacts (via N-terminus) with SLC6A3 (via N-terminus). May interact with VMAT2. As to expression, expressed in brain and placenta.

It localises to the cytoplasmic vesicle. It is found in the secretory vesicle. Its subcellular location is the synaptic vesicle membrane. The protein resides in the synapse. In terms of biological role, may play a role in regulated exocytosis. May indirectly regulate the activity of the plasma membrane dopamine transporter SLC6A3 and thereby regulate dopamine transport back from the synaptic cleft into the presynaptic terminal. The sequence is that of Synaptogyrin-3 from Homo sapiens (Human).